The primary structure comprises 600 residues: Glutamine--fructose-6-phosphate aminotransferase [isomerizing] (600 aa).

C2 functions as the Nucleophile; for GATase activity in the catalytic mechanism. A Glutamine amidotransferase type-2 domain is found at 2 to 217 (CGIVGYIGTE…DEEIVIVTKD (216 aa)). SIS domains are found at residues 283-422 (IRQA…AKGI) and 452-590 (IARD…VDKP). The active-site For Fru-6P isomerization activity is K595.

As to quaternary structure, homodimer.

It localises to the cytoplasm. The catalysed reaction is D-fructose 6-phosphate + L-glutamine = D-glucosamine 6-phosphate + L-glutamate. In terms of biological role, catalyzes the first step in hexosamine metabolism, converting fructose-6P into glucosamine-6P using glutamine as a nitrogen source. In Halalkalibacterium halodurans (strain ATCC BAA-125 / DSM 18197 / FERM 7344 / JCM 9153 / C-125) (Bacillus halodurans), this protein is Glutamine--fructose-6-phosphate aminotransferase [isomerizing].